Consider the following 675-residue polypeptide: Protein C-mannosyl-transferase DPY19L1 (675 aa).

Residues 1–22 are disordered; the sequence is MEGRPPPEGRPPPRPRTGRAPR. Helical transmembrane passes span 66–88, 156–176, 186–208, 236–254, 260–279, 286–303, 309–325, 334–354, 414–434, 449–469, and 491–511; these read LYYS…WMIM, ACFY…LFFI, LGGL…VMWT, LYRG…FMLP, FVLL…GYID, IIYI…LMFG, TSYY…ILAM, VSEL…TVIL, VVLV…WGVL, GELV…ILIM, and LFGW…ILAA.

This sequence belongs to the dpy-19 family. In terms of tissue distribution, widely expressed.

It is found in the endoplasmic reticulum membrane. The catalysed reaction is L-tryptophyl-[protein] + a di-trans,poly-cis-dolichyl beta-D-mannosyl phosphate = C-alpha-D-mannosyl-L-tryptophyl-[protein] + a di-trans,poly-cis-dolichyl phosphate + H(+). The protein operates within protein modification; protein glycosylation. Functionally, C-mannosyltransferase that mediates the C-mannosylation tryptophan residues on target proteins. The reaction occurs on the luminal side of the endoplasmic reticulum and involves the transfer of a mannose unit from a dolichylphosphate mannose (Dol-P-Man) donor to an acceptor protein containing a WxxW consensus sequence. C-mannosylates the first two tryptophans in the WxxWxxWxxC motif in thrombospondin (TSP) type-1 of UNC5A. Regulates neurite extension during development. In Homo sapiens (Human), this protein is Protein C-mannosyl-transferase DPY19L1 (DPY19L1).